A 320-amino-acid polypeptide reads, in one-letter code: Cytochrome f (320 aa).

The N-terminal stretch at M1–S36 is a signal peptide. Residues Y37, C57, C60, and H61 each contribute to the heme site. Residues L286–L305 form a helical membrane-spanning segment.

The protein belongs to the cytochrome f family. The 4 large subunits of the cytochrome b6-f complex are cytochrome b6, subunit IV (17 kDa polypeptide, petD), cytochrome f and the Rieske protein, while the 4 small subunits are PetG, PetL, PetM and PetN. The complex functions as a dimer. Requires heme as cofactor.

Its subcellular location is the plastid. It localises to the chloroplast thylakoid membrane. In terms of biological role, component of the cytochrome b6-f complex, which mediates electron transfer between photosystem II (PSII) and photosystem I (PSI), cyclic electron flow around PSI, and state transitions. This chain is Cytochrome f (petA), found in Cyanidium caldarium (Red alga).